The primary structure comprises 645 residues: Beta-galactosidase (645 aa).

Position 102 (R102) interacts with substrate. Position 106 (C106) interacts with Zn(2+). N140 is a substrate binding site. E141 acts as the Proton donor in catalysis. C150, C152, and C155 together coordinate Zn(2+). The active-site Nucleophile is the E312. Substrate contacts are provided by residues W320 and 360 to 363 (EQMH).

The protein belongs to the glycosyl hydrolase 42 family. Homotrimer.

The catalysed reaction is Hydrolysis of terminal non-reducing beta-D-galactose residues in beta-D-galactosides.. With respect to regulation, inhibited by Cu(2+) and Fe(2+), and moderately activated by divalent cations such as Co(2+), Mn(2+) and Zn(2+). Considerably activated by dithiothreitol, beta-mercaptoethanol and cysteine. The protein is Beta-galactosidase of Thermus thermophilus.